The primary structure comprises 979 residues: Protein SMAX1-LIKE 6 (979 aa).

Residues 8–190 (ARECLTEEAA…PVTQLSSRFS (183 aa)) form the Clp R domain. 2 repeat regions span residues 12–86 (LTEE…LDRL) and 100–190 (VSNS…SRFS). The EAR motif lies at 833 to 837 (LDLNL).

This sequence belongs to the ClpA/ClpB family. As to quaternary structure, interacts with TPL/TPR in an EAR-motif dependent manner. Interacts with TPR3. Interacts with MAX2 and TPR2. Interacts with D14. The interaction with D14 occurs in the presence of (2'R) stereoisomers of strigolactones, but not (2'S) stereoisomers. In terms of processing, ubiquitinated upon strigolactone treatment. Probable proteolytic target of SCF(MAX2)-mediated stigolactone signaling. Detected in roots, seedlings and axillary branches. Expressed in the primary rosette buds and expanding leaves of adult rosettes, the vasculature of the hypocotyls, cotyledons, and mature roots, and in the midvein and petioles of young leaves.

The protein localises to the nucleus. Its function is as follows. Probable component of a transcriptional corepressor complex involved in branching control. Regulates cotyledon expansion and lateral root growth, but not germination or hypocotyl elongation. Promotes auxin transport and PIN1 accumulation in the stem and represses BRC1/TCP18 expression in axillary buds. This is Protein SMAX1-LIKE 6 from Arabidopsis thaliana (Mouse-ear cress).